A 336-amino-acid polypeptide reads, in one-letter code: Protein-glutamate methylesterase/protein-glutamine glutaminase 2 (336 aa).

Residues 2–119 enclose the Response regulatory domain; sequence KIAIVNDMPM…PNPKEAAAPL (118 aa). At Asp-53 the chain carries 4-aspartylphosphate. The CheB-type methylesterase domain maps to 147–336; it reads PSRRDRLVAI…APRLIEVFTQ (190 aa). Active-site residues include Ser-159, His-186, and Asp-279.

The protein belongs to the CheB family. Post-translationally, phosphorylated by CheA. Phosphorylation of the N-terminal regulatory domain activates the methylesterase activity.

It is found in the cytoplasm. The enzyme catalyses [protein]-L-glutamate 5-O-methyl ester + H2O = L-glutamyl-[protein] + methanol + H(+). The catalysed reaction is L-glutaminyl-[protein] + H2O = L-glutamyl-[protein] + NH4(+). Involved in chemotaxis. Part of a chemotaxis signal transduction system that modulates chemotaxis in response to various stimuli. Catalyzes the demethylation of specific methylglutamate residues introduced into the chemoreceptors (methyl-accepting chemotaxis proteins or MCP) by CheR. Also mediates the irreversible deamidation of specific glutamine residues to glutamic acid. This Pseudomonas syringae pv. syringae (strain B728a) protein is Protein-glutamate methylesterase/protein-glutamine glutaminase 2.